Consider the following 334-residue polypeptide: Tryptophan--tRNA ligase (334 aa).

ATP contacts are provided by residues 11 to 13 (QPS) and 19 to 20 (GN). Residues 12–20 (PSGELTIGN) carry the 'HIGH' region motif. Asp135 is a binding site for L-tryptophan. Residues 147-149 (GED), Val186, and 195-199 (KMSKS) contribute to the ATP site. Positions 195–199 (KMSKS) match the 'KMSKS' region motif.

This sequence belongs to the class-I aminoacyl-tRNA synthetase family. In terms of assembly, homodimer.

It localises to the cytoplasm. The catalysed reaction is tRNA(Trp) + L-tryptophan + ATP = L-tryptophyl-tRNA(Trp) + AMP + diphosphate + H(+). Functionally, catalyzes the attachment of tryptophan to tRNA(Trp). This is Tryptophan--tRNA ligase from Klebsiella aerogenes (Enterobacter aerogenes).